Here is a 480-residue protein sequence, read N- to C-terminus: Protein nucleotidyltransferase YdiU (480 aa).

The ATP site is built by Gly86, Gly88, Arg89, Lys109, Asp121, Gly122, Arg172, and Arg179. Catalysis depends on Asp248, which acts as the Proton acceptor. Residues Asn249 and Asp258 each contribute to the Mg(2+) site. An ATP-binding site is contributed by Asp258.

It belongs to the SELO family. It depends on Mg(2+) as a cofactor. Requires Mn(2+) as cofactor.

The catalysed reaction is L-seryl-[protein] + ATP = 3-O-(5'-adenylyl)-L-seryl-[protein] + diphosphate. It catalyses the reaction L-threonyl-[protein] + ATP = 3-O-(5'-adenylyl)-L-threonyl-[protein] + diphosphate. The enzyme catalyses L-tyrosyl-[protein] + ATP = O-(5'-adenylyl)-L-tyrosyl-[protein] + diphosphate. It carries out the reaction L-histidyl-[protein] + UTP = N(tele)-(5'-uridylyl)-L-histidyl-[protein] + diphosphate. The catalysed reaction is L-seryl-[protein] + UTP = O-(5'-uridylyl)-L-seryl-[protein] + diphosphate. It catalyses the reaction L-tyrosyl-[protein] + UTP = O-(5'-uridylyl)-L-tyrosyl-[protein] + diphosphate. Nucleotidyltransferase involved in the post-translational modification of proteins. It can catalyze the addition of adenosine monophosphate (AMP) or uridine monophosphate (UMP) to a protein, resulting in modifications known as AMPylation and UMPylation. The protein is Protein nucleotidyltransferase YdiU of Salmonella newport (strain SL254).